We begin with the raw amino-acid sequence, 517 residues long: Xyloglucan galactosyltransferase XLT2 (517 aa).

Residues 1–31 form a disordered region; that stretch reads MLPVSNPSSPEHLLKKSRTPDSTTSIDRKNS. Residues 1-49 are Cytoplasmic-facing; that stretch reads MLPVSNPSSPEHLLKKSRTPDSTTSIDRKNSFNSLHSVGNRSSYIAASR. Residues 20–31 are compositionally biased toward polar residues; that stretch reads PDSTTSIDRKNS. The chain crosses the membrane as a helical; Signal-anchor for type II membrane protein span at residues 50–70; it reads SHCTWLILSLLSLQLILFLTL. Topologically, residues 71–517 are lumenal; sequence RSIPFPHRHI…KEQEKWYKWR (447 aa). Residues N250, N288, N377, and N449 are each glycosylated (N-linked (GlcNAc...) asparagine).

The protein belongs to the glycosyltransferase 47 family. Interacts with CSLC4, FUT1, XXT2 and XXT5. In terms of tissue distribution, expressed in roots, hypocotyls, cotyledons, leaves, stems and flowers.

It is found in the golgi apparatus membrane. Its function is as follows. Functions in xyloglucan synthesis by adding side chains to the xylosylated glucan backbone. Involved in galactosylating hemicellulose xyloglucan (XyG) at the second position of the XXXG motif to form XLXG. Associates with other xyloglucan-synthesizing enzymes to form multiprotein complexes for xyloglucan synthesis in the Golgi. The polypeptide is Xyloglucan galactosyltransferase XLT2 (Arabidopsis thaliana (Mouse-ear cress)).